The chain runs to 317 residues: Apolipoprotein E (317 aa).

A signal peptide spans 1–18 (MKVLWAALLVTFLAGCQA). Repeat copies occupy residues 80–101 (TLMD…EQLS), 102–123 (PVAE…ARLG), 124–145 (ADME…AMLG), 146–167 (QSTE…KRLL), 168–189 (RDAD…EGAE), 190–211 (RGVS…VRAA), 212–233 (TVGS…ERLR), and 234–255 (ARME…EQVA). Residues 80–255 (TLMDETMKEL…RLDEVKEQVA (176 aa)) are 8 X 22 AA approximate tandem repeats. Methionine sulfoxide is present on Met143. The residue at position 147 (Ser147) is a Phosphoserine. The tract at residues 158–168 (HLRKLRKRLLR) is LDL and other lipoprotein receptors binding. Heparin is bound at residue 162–165 (LRKR). The tract at residues 210–290 (AATVGSLAGQ…SWFEPLVEDM (81 aa)) is lipid-binding and lipoprotein association. The O-linked (GalNAc...) threonine glycan is linked to Thr212. Residue 229–236 (GERLRARM) participates in heparin binding. The tract at residues 266 to 317 (QQISLQAEAFQARLKSWFEPLVEDMQRQWAGLVEKVQAAVGASTAPVPSDNH) is homooligomerization. The specificity for association with VLDL stretch occupies residues 278–290 (RLKSWFEPLVEDM).

It belongs to the apolipoprotein A1/A4/E family. As to quaternary structure, homotetramer. May interact with ABCA1; functionally associated with ABCA1 in the biogenesis of HDLs. May interact with APP/A4 amyloid-beta peptide; the interaction is extremely stable in vitro but its physiological significance is unclear. May interact with MAPT. May interact with MAP2. In the cerebrospinal fluid, interacts with secreted SORL1. Interacts with PMEL; this allows the loading of PMEL luminal fragment on ILVs to induce fibril nucleation. Post-translationally, APOE exists as multiple glycosylated and sialylated glycoforms within cells and in plasma. The extent of glycosylation and sialylation are tissue and context specific. Glycated in plasma VLDL. In terms of processing, phosphorylated by FAM20C in the extracellular medium.

The protein resides in the secreted. It localises to the extracellular space. It is found in the extracellular matrix. Its subcellular location is the extracellular vesicle. The protein localises to the endosome. The protein resides in the multivesicular body. Its function is as follows. APOE is an apolipoprotein, a protein associating with lipid particles, that mainly functions in lipoprotein-mediated lipid transport between organs via the plasma and interstitial fluids. APOE is a core component of plasma lipoproteins and is involved in their production, conversion and clearance. Apolipoproteins are amphipathic molecules that interact both with lipids of the lipoprotein particle core and the aqueous environment of the plasma. As such, APOE associates with chylomicrons, chylomicron remnants, very low density lipoproteins (VLDL) and intermediate density lipoproteins (IDL) but shows a preferential binding to high-density lipoproteins (HDL). It also binds a wide range of cellular receptors including the LDL receptor/LDLR, the LDL receptor-related proteins LRP1, LRP2 and LRP8 and the very low-density lipoprotein receptor/VLDLR that mediate the cellular uptake of the APOE-containing lipoprotein particles. Finally, APOE also has a heparin-binding activity and binds heparan-sulfate proteoglycans on the surface of cells, a property that supports the capture and the receptor-mediated uptake of APOE-containing lipoproteins by cells. A main function of APOE is to mediate lipoprotein clearance through the uptake of chylomicrons, VLDLs, and HDLs by hepatocytes. APOE is also involved in the biosynthesis by the liver of VLDLs as well as their uptake by peripheral tissues ensuring the delivery of triglycerides and energy storage in muscle, heart and adipose tissues. By participating in the lipoprotein-mediated distribution of lipids among tissues, APOE plays a critical role in plasma and tissues lipid homeostasis. APOE is also involved in two steps of reverse cholesterol transport, the HDLs-mediated transport of cholesterol from peripheral tissues to the liver, and thereby plays an important role in cholesterol homeostasis. First, it is functionally associated with ABCA1 in the biogenesis of HDLs in tissues. Second, it is enriched in circulating HDLs and mediates their uptake by hepatocytes. APOE also plays an important role in lipid transport in the central nervous system, regulating neuron survival and sprouting. In Rhinopithecus roxellana (Golden snub-nosed monkey), this protein is Apolipoprotein E (APOE).